We begin with the raw amino-acid sequence, 291 residues long: Urease accessory protein UreD (291 aa).

Belongs to the UreD family. As to quaternary structure, ureD, UreF and UreG form a complex that acts as a GTP-hydrolysis-dependent molecular chaperone, activating the urease apoprotein by helping to assemble the nickel containing metallocenter of UreC. The UreE protein probably delivers the nickel.

It localises to the cytoplasm. Required for maturation of urease via the functional incorporation of the urease nickel metallocenter. This Polynucleobacter asymbioticus (strain DSM 18221 / CIP 109841 / QLW-P1DMWA-1) (Polynucleobacter necessarius subsp. asymbioticus) protein is Urease accessory protein UreD.